A 476-amino-acid polypeptide reads, in one-letter code: Cytochrome P450 monooxygenase ppzE (476 aa).

Cys-452 serves as a coordination point for heme.

Belongs to the cytochrome P450 family. Heme is required as a cofactor.

It functions in the pathway secondary metabolite biosynthesis. Functionally, cytochrome P450 monooxygenase; part of the gene cluster that mediates the biosynthesis of pyrrolopyrazines, secondary metabolites showing insecticidal activity. The role of ppzE within the pathway has still to be determined. The single multifunctional NRPS ppzA is sufficient to produce peramine via condensation of 1-pyrroline-5-carboxylate and arginine, N-methylation of the alpha-amino group of arginine and reduction of the thioester and the cyclization to form an iminium ion resulting in release from the peptide synthetase. Deprotonation of this intermediate and oxidation of the pyrroline ring would give rise to peramine. In Epichloe species that produce only peramine, the peramine synthetase gene is not localized in a gene cluster, in contrast to Metarhizium species that contain additional pyrrolopyrazine biosynthesis genes. The 2-oxoglutarate-Fe(II) type oxidoreductase ppzC hydroxylates peramine to yield the newly identified compound 8-hydroxyperamine whereas ppzD converts L-proline into trans-4-hydroxy-L-proline, a precursor of peramine biosynthesis. This chain is Cytochrome P450 monooxygenase ppzE, found in Metarhizium majus (strain ARSEF 297).